The primary structure comprises 835 residues: MSDPQERSKAYGLLGERLYAVASANSHMLAGYDSLDFTARLVRLTGEATALKAVDPLLPCAVSLLFMDFPLQLPCTPEETLRLVRRAYDPNTLEEVDYSTLSGYATQFARVKGQRGRWRHLGHLVCNDKAFRERYFPKKKHAAAAIKTNIRLGPLARAWAARYGLAALGSHLAYMVGMPNDRACATLLLAQTYKARFGSEGVAWAIASVRQPENAKGLSNALKALGSNTSEPGALFVEANTLQGRYDRTLDMDHEVESRCSPAAIADQVIPYTDELGACIDFILDTELGGDTIELPDEDEWWTSRWLWCVNGSQNALSDKALGIKNKSGQRYRRMAAEEVNNNPVPAWNGHTSVSPSVKLENGKDRAIFACDTRSYFAFTYWLTPIEKKWRGARVILNPGEGGLYGTARRIRGSQTSGGVNLMLDYDNFNSQHSNETMAALYEKALSRTNAPAYLKKAVAASVESTYIHYKGRDRHVLGTLMSGHRATTFTNSVLNAAYICYAVGIPAFKRMISLHAGDDVYLRLPTLADCATTLNNTKRVGCRMNPTKQSIGYTGAEFLRLGINKSYAIGYLCRAIASLVSGSWTSLDELQPLNALNGAIVQTRSCLNRGAATGLPELISASFVGLRGFKRRDLLELLTGVATIKPGPVYTSSCVIREYVVEQPPPPQFDVPPGAGMHATMSYLARHTTLVEAQALEIARPAIKSLMLSSSYGKAGPGAQTRPHVPMPKLRRQPPRVAVGFSMAHELTGRGVKEGCLSGHPLLRLFEQRLTDDDLRALVALVGGNTSAKDIRAEAFGAESSSSTIMGILPHSDASNYCKRTRNGNIIVPYHIRS.

It belongs to the totiviridae RNA-directed RNA polymerase family.

It carries out the reaction RNA(n) + a ribonucleoside 5'-triphosphate = RNA(n+1) + diphosphate. Functionally, RNA-dependent RNA polymerase which replicates the viral genome. Catalyzes the transcription of fully conservative plus-strand genomic RNAs that are extruded from the virion into the cytoplasm where they function as mRNAs for translation of viral proteins and also as substrates for encapsidation to form new virions. Once encapsidated, the positive strand is converted to dsRNA by the RNA-directed RNA polymerase. This chain is Probable RNA-directed RNA polymerase, found in Helminthosporium victoriae virus-190S (Hv190SV).